The chain runs to 469 residues: Cytoplasmic tRNA 2-thiolation protein 2 (469 aa).

It belongs to the CTU2/NCS2 family.

It is found in the cytoplasm. The protein operates within tRNA modification; 5-methoxycarbonylmethyl-2-thiouridine-tRNA biosynthesis. Functionally, plays a central role in 2-thiolation of mcm(5)S(2)U at tRNA wobble positions of tRNA(Lys), tRNA(Glu) and tRNA(Gln). May act by forming a heterodimer with NCS6 that ligates sulfur from thiocarboxylated URM1 onto the uridine of tRNAs at wobble position. Prior mcm(5) tRNA modification by the elongator complex is required for 2-thiolation. May also be involved in protein urmylation. The protein is Cytoplasmic tRNA 2-thiolation protein 2 of Candida glabrata (strain ATCC 2001 / BCRC 20586 / JCM 3761 / NBRC 0622 / NRRL Y-65 / CBS 138) (Yeast).